The following is a 123-amino-acid chain: Sterol carrier protein 2 (123 aa).

The SCP2 domain occupies 16–113; the sequence is KEHLSTDAGK…GSLSAAQKFT (98 aa). A Microbody targeting signal motif is present at residues 121–123; it reads SKL.

Expressed in most tissues including seedlings, cotyledons, inflorescence, leaves, stems, roots, siliques and flower buds, with the highest levels in floral tissues and in maturing seeds.

It is found in the peroxisome. Its function is as follows. Enhances the transfer of lipids between membranes in vitro. Active on phosphatidylcholine (PC), 1-palmitoyl 2-oleoyl phosphatidylcholine (POPC) and ergosterol, and, to a lower extent, dimyristoyl phosphatidic acid, stigmasterol, desmosterol, beta-sitosterol and steryl glucoside. Inactive or poorly active on palmitic acid, stearoyl-coenzyme A, cholesterol, glucosylceramide and ceramide. Required during seeds and seedlings development. This chain is Sterol carrier protein 2, found in Arabidopsis thaliana (Mouse-ear cress).